The primary structure comprises 582 residues: Glutaredoxin domain-containing cysteine-rich protein CG12206 (582 aa).

Over residues 217 to 227 (CETLDSGTGSD) the composition is skewed to polar residues. Disordered regions lie at residues 217–244 (CETLDSGTGSDLENHPQQQQQPQQVRSP) and 260–300 (EADH…SCDS). Over residues 291 to 300 (SSNSSLSCDS) the composition is skewed to low complexity. Residues 423–528 (NVKNYMEKDV…QLLRPYKSIA (106 aa)) form the Glutaredoxin domain.

It belongs to the GRXCR1 family.

The chain is Glutaredoxin domain-containing cysteine-rich protein CG12206 from Drosophila melanogaster (Fruit fly).